The primary structure comprises 143 residues: 3-dehydroquinate dehydratase (143 aa).

Catalysis depends on Y22, which acts as the Proton acceptor. Substrate contacts are provided by N73, H79, and D86. H99 (proton donor) is an active-site residue. Residues 100–101 and R110 each bind substrate; that span reads IS.

Belongs to the type-II 3-dehydroquinase family. Homododecamer.

It catalyses the reaction 3-dehydroquinate = 3-dehydroshikimate + H2O. Its pathway is metabolic intermediate biosynthesis; chorismate biosynthesis; chorismate from D-erythrose 4-phosphate and phosphoenolpyruvate: step 3/7. In terms of biological role, catalyzes a trans-dehydration via an enolate intermediate. This is 3-dehydroquinate dehydratase from Mycolicibacterium paratuberculosis (strain ATCC BAA-968 / K-10) (Mycobacterium paratuberculosis).